The following is a 475-amino-acid chain: Aspartyl/glutamyl-tRNA(Asn/Gln) amidotransferase subunit B (475 aa).

It belongs to the GatB/GatE family. GatB subfamily. In terms of assembly, heterotrimer of A, B and C subunits.

The catalysed reaction is L-glutamyl-tRNA(Gln) + L-glutamine + ATP + H2O = L-glutaminyl-tRNA(Gln) + L-glutamate + ADP + phosphate + H(+). The enzyme catalyses L-aspartyl-tRNA(Asn) + L-glutamine + ATP + H2O = L-asparaginyl-tRNA(Asn) + L-glutamate + ADP + phosphate + 2 H(+). Its function is as follows. Allows the formation of correctly charged Asn-tRNA(Asn) or Gln-tRNA(Gln) through the transamidation of misacylated Asp-tRNA(Asn) or Glu-tRNA(Gln) in organisms which lack either or both of asparaginyl-tRNA or glutaminyl-tRNA synthetases. The reaction takes place in the presence of glutamine and ATP through an activated phospho-Asp-tRNA(Asn) or phospho-Glu-tRNA(Gln). This is Aspartyl/glutamyl-tRNA(Asn/Gln) amidotransferase subunit B from Trichlorobacter lovleyi (strain ATCC BAA-1151 / DSM 17278 / SZ) (Geobacter lovleyi).